Consider the following 226-residue polypeptide: PKHD-type hydroxylase Plav_0377 (226 aa).

Positions 78-178 constitute a Fe2OG dioxygenase domain; that stretch reads KVLPPRFNRY…RLASFFWVQS (101 aa). 3 residues coordinate Fe cation: H96, D98, and H159. A 2-oxoglutarate-binding site is contributed by R169.

Fe(2+) serves as cofactor. L-ascorbate is required as a cofactor.

This is PKHD-type hydroxylase Plav_0377 from Parvibaculum lavamentivorans (strain DS-1 / DSM 13023 / NCIMB 13966).